Reading from the N-terminus, the 114-residue chain is Large ribosomal subunit protein bL20 (114 aa).

The protein belongs to the bacterial ribosomal protein bL20 family.

Functionally, binds directly to 23S ribosomal RNA and is necessary for the in vitro assembly process of the 50S ribosomal subunit. It is not involved in the protein synthesizing functions of that subunit. The sequence is that of Large ribosomal subunit protein bL20 from Anaeromyxobacter sp. (strain Fw109-5).